A 540-amino-acid polypeptide reads, in one-letter code: Lysosomal cobalamin transport escort protein LMBD1 (540 aa).

The Extracellular portion of the chain corresponds to Met1–Glu10. Residues Leu11–Ile31 traverse the membrane as a helical segment. Topologically, residues Tyr32–Ala50 are cytoplasmic. Residues Ile51–Val71 traverse the membrane as a helical segment. The Extracellular portion of the chain corresponds to Ser72–Gly100. Asn78 and Asn88 each carry an N-linked (GlcNAc...) asparagine glycan. Residues Tyr101 to Phe121 form a helical membrane-spanning segment. Residues Tyr122–Thr144 lie on the Cytoplasmic side of the membrane. The helical transmembrane segment at Leu145–Val165 threads the bilayer. At Pro166–His188 the chain is on the extracellular side. N-linked (GlcNAc...) asparagine glycosylation is present at Asn170. Residues Gly189–Ile209 form a helical membrane-spanning segment. The Cytoplasmic segment spans residues Thr210–Lys305. The short motif at Tyr232–Leu235 is the YERL motif; mediates interaction with adapter protein complex 2 and is essential for its function in clathrin-mediated endocytosis of INSR element. Phosphothreonine is present on Thr238. The short motif at Trp294–Phe297 is the WTKF motif; mediates interaction with adapter protein complex 2 and is essential for its function in clathrin-mediated endocytosis of INSR element. The helical transmembrane segment at Ile306–Ser326 threads the bilayer. At Asn327–Pro364 the chain is on the extracellular side. An N-linked (GlcNAc...) asparagine glycan is attached at Asn347. The chain crosses the membrane as a helical span at residues Leu365–Ile385. The Cytoplasmic portion of the chain corresponds to Arg386–Gln408. Residues Ala409–Tyr429 form a helical membrane-spanning segment. Residues Ser430–Lys486 lie on the Extracellular side of the membrane. N-linked (GlcNAc...) asparagine glycans are attached at residues Asn448 and Asn457. The helical transmembrane segment at Phe487 to Ile507 threads the bilayer. Over Gly508–Ala540 the chain is Cytoplasmic. 2 positions are modified to phosphoserine: Ser528 and Ser531.

Belongs to the LIMR family. LMBRD1 subfamily. In terms of assembly, (Microbial infection) Interacts with hepatitis delta virus NES (HDAg-L). As to quaternary structure, interacts with ABCD4; this interaction induces the translocation of ABCD4 from the endoplasmic reticulum to the lysosome. Interacts with ABCD4 and MMACHC; this interaction ensures the transport of cobalamin from the lysosome to the cytoplasm. Interacts with INSR, adapter protein complex 2 and clathrin heavy chain. In terms of processing, N-glycosylated. Isoform 3 is expressed in liver.

It is found in the endoplasmic reticulum membrane. The protein localises to the lysosome membrane. Its subcellular location is the cell membrane. The protein resides in the cytoplasmic vesicle. It localises to the clathrin-coated vesicle. Its function is as follows. Lysosomal membrane chaperone required to export cobalamin (vitamin B12) from the lysosome to the cytosol, allowing its conversion to cofactors. Targets ABCD4 transporter from the endoplasmic reticulum to the lysosome. Then forms a complex with lysosomal ABCD4 and cytoplasmic MMACHC to transport cobalamin across the lysosomal membrane. Acts as an adapter protein which plays an important role in mediating and regulating the internalization of the insulin receptor (INSR). Involved in clathrin-mediated endocytosis of INSR via its interaction with adapter protein complex 2. Essential for the initiation of gastrulation and early formation of mesoderm structures during embryogenesis. Functionally, (Microbial infection) May play a role in the assembly of hepatitis delta virus (HDV). This is Lysosomal cobalamin transport escort protein LMBD1 from Homo sapiens (Human).